The sequence spans 252 residues: MRIDVISLFPEFIAQCAAFGVVGRAQERGLLELQGWNPRDHAQGNYRRVDDRPFGGGPGMVMLIEPLRACLEAAKAADARPAPVIYLSPQGRPLTQPLARELAQLPRMVLLCGRYEGVDERFLDQAVDMEISIGDYVLSGGELGAAVLVDVVTRLQDGVLNDAESAAQDSFEGPQGLLDCPHYSHPSSHAWGDVPEVLRSGNHGAIARWRRQQSLGRTWLRRPELLDEATLDKQDRRLLEEFRRELAPGDEK.

Residues glycine 113 and isoleucine 133–leucine 138 each bind S-adenosyl-L-methionine.

The protein belongs to the RNA methyltransferase TrmD family. Homodimer.

Its subcellular location is the cytoplasm. The enzyme catalyses guanosine(37) in tRNA + S-adenosyl-L-methionine = N(1)-methylguanosine(37) in tRNA + S-adenosyl-L-homocysteine + H(+). Its function is as follows. Specifically methylates guanosine-37 in various tRNAs. The polypeptide is tRNA (guanine-N(1)-)-methyltransferase (Xanthomonas campestris pv. campestris (strain B100)).